A 472-amino-acid polypeptide reads, in one-letter code: Ribulose bisphosphate carboxylase large chain (472 aa).

Positions 120 and 170 each coordinate substrate. The active-site Proton acceptor is lysine 172. Lysine 174 lines the substrate pocket. Residues lysine 198, aspartate 200, and glutamate 201 each coordinate Mg(2+). Lysine 198 carries the post-translational modification N6-carboxylysine. Histidine 291 serves as the catalytic Proton acceptor. 3 residues coordinate substrate: arginine 292, histidine 324, and serine 376. Residues 461–467 (EIKFEFE) carry the Interacts with RbcX2 motif.

Belongs to the RuBisCO large chain family. Type I subfamily. In terms of assembly, heterohexadecamer of 8 large chains and 8 small chains; disulfide-linked. The disulfide link is formed within the large subunit homodimers. The exposed C-terminus binds in a cleft in the RbcX2 (shown with endogenous and Anabaena strain CA protein). RbcX2 is displaced by RbcS; as RbcX2 is removed RbcS mediates the ordering of an internal RbcL loop (Thr-64-Leu-70) in a catalytically active conformation. Requires Mg(2+) as cofactor. The disulfide bond which can form in the large chain dimeric partners within the hexadecamer appears to be associated with oxidative stress and protein turnover.

Its subcellular location is the carboxysome. The enzyme catalyses 2 (2R)-3-phosphoglycerate + 2 H(+) = D-ribulose 1,5-bisphosphate + CO2 + H2O. The catalysed reaction is D-ribulose 1,5-bisphosphate + O2 = 2-phosphoglycolate + (2R)-3-phosphoglycerate + 2 H(+). RuBisCO catalyzes two reactions: the carboxylation of D-ribulose 1,5-bisphosphate, the primary event in carbon dioxide fixation, as well as the oxidative fragmentation of the pentose substrate in the photorespiration process. Both reactions occur simultaneously and in competition at the same active site. This Synechococcus sp. (strain ATCC 27144 / PCC 6301 / SAUG 1402/1) (Anacystis nidulans) protein is Ribulose bisphosphate carboxylase large chain (cbbL).